The primary structure comprises 238 residues: Transcriptional activator protein AnoR (238 aa).

The region spanning 170–236 (EFSQFNLYLT…SAAIRAVMLG (67 aa)) is the HTH luxR-type domain. Residues 195-214 (SAEIAQIIGVTERTVNFHLC) constitute a DNA-binding region (H-T-H motif).

Belongs to the autoinducer-regulated transcriptional regulatory protein family.

Functionally, positively regulates the expression of anoI. Required for biofilm formation and motility. Probably part of a quorum-sensing system with AnoI. The sequence is that of Transcriptional activator protein AnoR from Acinetobacter nosocomialis.